The chain runs to 351 residues: Dihydroorotate dehydrogenase (quinone) (351 aa).

FMN-binding positions include 67 to 71 (AGFDK) and T91. Position 71 (K71) interacts with substrate. 116–120 (NAMGF) contacts substrate. The FMN site is built by N145 and N178. N178 is a substrate binding site. S181 acts as the Nucleophile in catalysis. N183 serves as a coordination point for substrate. The FMN site is built by K214 and T242. A substrate-binding site is contributed by 243 to 244 (NT). Residues G262, G291, and 312 to 313 (YS) contribute to the FMN site.

This sequence belongs to the dihydroorotate dehydrogenase family. Type 2 subfamily. In terms of assembly, monomer. FMN serves as cofactor.

It is found in the cell membrane. The enzyme catalyses (S)-dihydroorotate + a quinone = orotate + a quinol. The protein operates within pyrimidine metabolism; UMP biosynthesis via de novo pathway; orotate from (S)-dihydroorotate (quinone route): step 1/1. Its function is as follows. Catalyzes the conversion of dihydroorotate to orotate with quinone as electron acceptor. This is Dihydroorotate dehydrogenase (quinone) from Helicobacter pylori (strain Shi470).